A 202-amino-acid polypeptide reads, in one-letter code: Imidazoleglycerol-phosphate dehydratase (202 aa).

Belongs to the imidazoleglycerol-phosphate dehydratase family.

The protein resides in the cytoplasm. It catalyses the reaction D-erythro-1-(imidazol-4-yl)glycerol 3-phosphate = 3-(imidazol-4-yl)-2-oxopropyl phosphate + H2O. It participates in amino-acid biosynthesis; L-histidine biosynthesis; L-histidine from 5-phospho-alpha-D-ribose 1-diphosphate: step 6/9. The protein is Imidazoleglycerol-phosphate dehydratase of Chelativorans sp. (strain BNC1).